The chain runs to 101 residues: Protein Tat (101 aa).

Residues 1 to 24 are interaction with human CREBBP; that stretch reads MDPVDPNLEPWNHPGSQPKTPCNK. The interval 1 to 48 is transactivation; that stretch reads MDPVDPNLEPWNHPGSQPKTPCNKCFCKVCCWHCQVCFLNKGLGISYG. Zn(2+) is bound by residues cysteine 22, cysteine 25, and cysteine 27. The cysteine-rich stretch occupies residues 22–37; the sequence is CNKCFCKVCCWHCQVC. Lysine 28 carries the N6-acetyllysine; by host PCAF modification. The Zn(2+) site is built by cysteine 30, histidine 33, cysteine 34, and cysteine 37. The tract at residues 38–48 is core; sequence FLNKGLGISYG. Basic residues predominate over residues 48–57; it reads GRKKRKHRRG. The tract at residues 48-101 is disordered; the sequence is GRKKRKHRRGTPQSSKGHQDPVPKQPLPTTRGNPTGPKESKKEVASKAEADQCD. A Nuclear localization signal, RNA-binding (TAR), and protein transduction motif is present at residues 49–57; sequence RKKRKHRRG. An interaction with the host capping enzyme RNGTT region spans residues 49–86; sequence RKKRKHRRGTPQSSKGHQDPVPKQPLPTTRGNPTGPKE. N6-acetyllysine; by host EP300 and GCN5L2 is present on residues lysine 50 and lysine 51. Arginine 52 bears the Asymmetric dimethylarginine; by host PRMT6 mark. A Glycyl lysine isopeptide (Lys-Gly) (interchain with G-Cter in ubiquitin) cross-link involves residue lysine 71. Basic and acidic residues predominate over residues 85–101; it reads KESKKEVASKAEADQCD.

This sequence belongs to the lentiviruses Tat family. Interacts with host CCNT1. Associates with the P-TEFb complex composed at least of Tat, P-TEFb (CDK9 and CCNT1), TAR RNA, RNA Pol II. Recruits the HATs CREBBP, TAF1/TFIID, EP300, PCAF and GCN5L2. Interacts with host KAT5/Tip60; this interaction targets the latter to degradation. Interacts with the host deacetylase SIRT1. Interacts with host capping enzyme RNGTT; this interaction stimulates RNGTT. Binds to host KDR, and to the host integrins ITGAV/ITGB3 and ITGA5/ITGB1. Interacts with host KPNB1/importin beta-1 without previous binding to KPNA1/importin alpha-1. Interacts with EIF2AK2. Interacts with host nucleosome assembly protein NAP1L1; this interaction may be required for the transport of Tat within the nucleus, since the two proteins interact at the nuclear rim. Interacts with host C1QBP/SF2P32; this interaction involves lysine-acetylated Tat. Interacts with the host chemokine receptors CCR2, CCR3 and CXCR4. Interacts with host DPP4/CD26; this interaction may trigger an anti-proliferative effect. Interacts with host LDLR. Interacts with the host extracellular matrix metalloproteinase MMP1. Interacts with host PRMT6; this interaction mediates Tat's methylation. Interacts with, and is ubiquitinated by MDM2/Hdm2. Interacts with host PSMC3 and HTATIP2. Interacts with STAB1; this interaction may overcome SATB1-mediated repression of IL2 and IL2RA (interleukin) in T cells by binding to the same domain than HDAC1. Interacts (when acetylated) with human CDK13, thereby increasing HIV-1 mRNA splicing and promoting the production of the doubly spliced HIV-1 protein Nef. Interacts with host TBP; this interaction modulates the activity of transcriptional pre-initiation complex. Interacts with host RELA. Interacts with host PLSCR1; this interaction negatively regulates Tat transactivation activity by altering its subcellular distribution. In terms of processing, asymmetrical arginine methylation by host PRMT6 seems to diminish the transactivation capacity of Tat and affects the interaction with host CCNT1. Post-translationally, acetylation by EP300, CREBBP, GCN5L2/GCN5 and PCAF regulates the transactivation activity of Tat. EP300-mediated acetylation of Lys-50 promotes dissociation of Tat from the TAR RNA through the competitive binding to PCAF's bromodomain. In addition, the non-acetylated Tat's N-terminus can also interact with PCAF. PCAF-mediated acetylation of Lys-28 enhances Tat's binding to CCNT1. Lys-50 is deacetylated by SIRT1. Polyubiquitination by host MDM2 does not target Tat to degradation, but activates its transactivation function and fosters interaction with CCNT1 and TAR RNA. In terms of processing, phosphorylated by EIF2AK2 on serine and threonine residues adjacent to the basic region important for TAR RNA binding and function. Phosphorylation of Tat by EIF2AK2 is dependent on the prior activation of EIF2AK2 by dsRNA.

It is found in the host nucleus. It localises to the host nucleolus. The protein localises to the host cytoplasm. The protein resides in the secreted. Functionally, transcriptional activator that increases RNA Pol II processivity, thereby increasing the level of full-length viral transcripts. Recognizes a hairpin structure at the 5'-LTR of the nascent viral mRNAs referred to as the transactivation responsive RNA element (TAR) and recruits the cyclin T1-CDK9 complex (P-TEFb complex) that will in turn hyperphosphorylate the RNA polymerase II to allow efficient elongation. The CDK9 component of P-TEFb and other Tat-activated kinases hyperphosphorylate the C-terminus of RNA Pol II that becomes stabilized and much more processive. Other factors such as HTATSF1/Tat-SF1, SUPT5H/SPT5, and HTATIP2 are also important for Tat's function. Besides its effect on RNA Pol II processivity, Tat induces chromatin remodeling of proviral genes by recruiting the histone acetyltransferases (HATs) CREBBP, EP300 and PCAF to the chromatin. This also contributes to the increase in proviral transcription rate, especially when the provirus integrates in transcriptionally silent region of the host genome. To ensure maximal activation of the LTR, Tat mediates nuclear translocation of NF-kappa-B by interacting with host RELA. Through its interaction with host TBP, Tat may also modulate transcription initiation. Tat can reactivate a latently infected cell by penetrating in it and transactivating its LTR promoter. In the cytoplasm, Tat is thought to act as a translational activator of HIV-1 mRNAs. Extracellular circulating Tat can be endocytosed by surrounding uninfected cells via the binding to several surface receptors such as CD26, CXCR4, heparan sulfate proteoglycans (HSPG) or LDLR. Neurons are rarely infected, but they internalize Tat via their LDLR. Through its interaction with nuclear HATs, Tat is potentially able to control the acetylation-dependent cellular gene expression. Modulates the expression of many cellular genes involved in cell survival, proliferation or in coding for cytokines or cytokine receptors. Tat plays a role in T-cell and neurons apoptosis. Tat induced neurotoxicity and apoptosis probably contribute to neuroAIDS. Circulating Tat also acts as a chemokine-like and/or growth factor-like molecule that binds to specific receptors on the surface of the cells, affecting many cellular pathways. In the vascular system, Tat binds to ITGAV/ITGB3 and ITGA5/ITGB1 integrins dimers at the surface of endothelial cells and competes with bFGF for heparin-binding sites, leading to an excess of soluble bFGF. The polypeptide is Protein Tat (Homo sapiens (Human)).